Reading from the N-terminus, the 227-residue chain is Cytochrome c oxidase subunit 2 (227 aa).

Residues 1 to 14 (MAYPLQLGFQDATS) lie on the Mitochondrial intermembrane side of the membrane. Residues 15–45 (PVMEELLHFHDHTLMIIFLISSLVLYIIMLM) form a helical membrane-spanning segment. The Mitochondrial matrix segment spans residues 46 to 59 (LTTKLVHTNMMNVQ). A helical membrane pass occupies residues 60–87 (EMEMIWTILPAIILILIALPSLHTLYMM). The Mitochondrial intermembrane segment spans residues 88-227 (DEINNPLLTI…YFESWSASLA (140 aa)). Residues H161, C196, E198, C200, H204, and M207 each coordinate Cu cation. E198 serves as a coordination point for Mg(2+). Y218 is subject to Phosphotyrosine.

This sequence belongs to the cytochrome c oxidase subunit 2 family. Component of the cytochrome c oxidase (complex IV, CIV), a multisubunit enzyme composed of 14 subunits. The complex is composed of a catalytic core of 3 subunits MT-CO1, MT-CO2 and MT-CO3, encoded in the mitochondrial DNA, and 11 supernumerary subunits COX4I, COX5A, COX5B, COX6A, COX6B, COX6C, COX7A, COX7B, COX7C, COX8 and NDUFA4, which are encoded in the nuclear genome. The complex exists as a monomer or a dimer and forms supercomplexes (SCs) in the inner mitochondrial membrane with NADH-ubiquinone oxidoreductase (complex I, CI) and ubiquinol-cytochrome c oxidoreductase (cytochrome b-c1 complex, complex III, CIII), resulting in different assemblies (supercomplex SCI(1)III(2)IV(1) and megacomplex MCI(2)III(2)IV(2)). Found in a complex with TMEM177, COA6, COX18, COX20, SCO1 and SCO2. Interacts with TMEM177 in a COX20-dependent manner. Interacts with COX20. Interacts with COX16. Cu cation is required as a cofactor.

Its subcellular location is the mitochondrion inner membrane. The enzyme catalyses 4 Fe(II)-[cytochrome c] + O2 + 8 H(+)(in) = 4 Fe(III)-[cytochrome c] + 2 H2O + 4 H(+)(out). Component of the cytochrome c oxidase, the last enzyme in the mitochondrial electron transport chain which drives oxidative phosphorylation. The respiratory chain contains 3 multisubunit complexes succinate dehydrogenase (complex II, CII), ubiquinol-cytochrome c oxidoreductase (cytochrome b-c1 complex, complex III, CIII) and cytochrome c oxidase (complex IV, CIV), that cooperate to transfer electrons derived from NADH and succinate to molecular oxygen, creating an electrochemical gradient over the inner membrane that drives transmembrane transport and the ATP synthase. Cytochrome c oxidase is the component of the respiratory chain that catalyzes the reduction of oxygen to water. Electrons originating from reduced cytochrome c in the intermembrane space (IMS) are transferred via the dinuclear copper A center (CU(A)) of subunit 2 and heme A of subunit 1 to the active site in subunit 1, a binuclear center (BNC) formed by heme A3 and copper B (CU(B)). The BNC reduces molecular oxygen to 2 water molecules using 4 electrons from cytochrome c in the IMS and 4 protons from the mitochondrial matrix. The chain is Cytochrome c oxidase subunit 2 (MT-CO2) from Mammuthus primigenius (Siberian woolly mammoth).